The chain runs to 643 residues: Threonine--tRNA ligase (643 aa).

In terms of domain architecture, TGS spans 1–61 (MPIITLPDGS…EQDATLEIIT (61 aa)). The catalytic stretch occupies residues 243-534 (DHRKIGKALD…ITEEYAGFFP (292 aa)). The Zn(2+) site is built by C334, H385, and H511.

This sequence belongs to the class-II aminoacyl-tRNA synthetase family. As to quaternary structure, homodimer. The cofactor is Zn(2+).

The protein resides in the cytoplasm. It catalyses the reaction tRNA(Thr) + L-threonine + ATP = L-threonyl-tRNA(Thr) + AMP + diphosphate + H(+). In terms of biological role, catalyzes the attachment of threonine to tRNA(Thr) in a two-step reaction: L-threonine is first activated by ATP to form Thr-AMP and then transferred to the acceptor end of tRNA(Thr). Also edits incorrectly charged L-seryl-tRNA(Thr). The protein is Threonine--tRNA ligase of Haemophilus influenzae (strain PittEE).